Reading from the N-terminus, the 199-residue chain is Peroxiredoxin-1 (199 aa).

S2 carries the N-acetylserine modification. The Thioredoxin domain maps to 6 to 165 (AKIGHPAPNF…TLRLVQAFQF (160 aa)). K7 carries the post-translational modification N6-acetyllysine; alternate. A Glycyl lysine isopeptide (Lys-Gly) (interchain with G-Cter in SUMO2); alternate cross-link involves residue K7. N6-acetyllysine occurs at positions 16 and 27. The residue at position 32 (S32) is a Phosphoserine. K35 carries the post-translational modification N6-acetyllysine; alternate. K35 carries the post-translational modification N6-succinyllysine; alternate. The Cysteine sulfenic acid (-SOH) intermediate role is filled by C52. T90 is subject to Phosphothreonine; by CDK1. A Glycyl lysine isopeptide (Lys-Gly) (interchain with G-Cter in SUMO2) cross-link involves residue K120. K136 is modified (N6-acetyllysine). The disordered stretch occupies residues 176–199 (GWKPGSDTIKPDVQKSKEYFSKQK). The segment covering 184–199 (IKPDVQKSKEYFSKQK) has biased composition (basic and acidic residues). K185 participates in a covalent cross-link: Glycyl lysine isopeptide (Lys-Gly) (interchain with G-Cter in SUMO1). K197 bears the N6-acetyllysine mark.

Belongs to the peroxiredoxin family. AhpC/Prx1 subfamily. In terms of assembly, homodimer; disulfide-linked, upon oxidation. 5 homodimers assemble to form a ring-like decamer. Interacts with GDPD5; forms a mixed-disulfide with GDPD5. Interacts with SESN1 and SESN2. Interacts with FAM107A. Phosphorylated on Thr-90 during the M-phase, which leads to a more than 80% decrease in enzymatic activity. Post-translationally, acetylation increases reducing activity and resistance to superoxidation. Deacetylated by HDAC6 which decreases reducing activity. In terms of processing, the enzyme can be inactivated by further oxidation of the cysteine sulfenic acid (C(P)-SOH) to sulphinic acid (C(P)-SO2H) instead of its condensation to a disulfide bond. It can be reactivated by forming a transient disulfide bond with sulfiredoxin SRXN1, which reduces the cysteine sulfinic acid in an ATP- and Mg-dependent manner.

Its subcellular location is the cytoplasm. The protein localises to the melanosome. The catalysed reaction is a hydroperoxide + [thioredoxin]-dithiol = an alcohol + [thioredoxin]-disulfide + H2O. Thiol-specific peroxidase that catalyzes the reduction of hydrogen peroxide and organic hydroperoxides to water and alcohols, respectively. Plays a role in cell protection against oxidative stress by detoxifying peroxides and as sensor of hydrogen peroxide-mediated signaling events. Might participate in the signaling cascades of growth factors and tumor necrosis factor-alpha by regulating the intracellular concentrations of H(2)O(2). Reduces an intramolecular disulfide bond in GDPD5 that gates the ability to GDPD5 to drive postmitotic motor neuron differentiation. The sequence is that of Peroxiredoxin-1 (PRDX1) from Homo sapiens (Human).